Consider the following 206-residue polypeptide: MSVLGVGPRTVTPHLRKGMMESSSGISLARAEAFLRLFAILVLVLTACLLGFDTQTKLLFSTIKKTATFRDLGALQVVVYVDSVAAGYNLLQLGRGFISAKLKGKLINVSYVTLPWVCFLLDQAAVYTVFSANTAALQASIIAVTGESSLQWMKVCNRYTRFCIQVGGALLSGYLASLLMVLLSSLSAFSLFRLYSPKQFHLLKPT.

Residues methionine 1–alanine 31 lie on the Cytoplasmic side of the membrane. A helical membrane pass occupies residues glutamate 32 to phenylalanine 52. The Extracellular portion of the chain corresponds to aspartate 53–aspartate 71. Residues leucine 72–glutamine 92 traverse the membrane as a helical segment. Over leucine 93–tyrosine 111 the chain is Cytoplasmic. A helical transmembrane segment spans residues valine 112–alanine 132. At asparagine 133–arginine 161 the chain is on the extracellular side. The chain crosses the membrane as a helical span at residues phenylalanine 162–leucine 182. Topologically, residues leucine 183 to threonine 206 are cytoplasmic.

This sequence belongs to the Casparian strip membrane proteins (CASP) family. Homodimer and heterodimers.

Its subcellular location is the cell membrane. This Vitis vinifera (Grape) protein is CASP-like protein 2C1.